Here is a 308-residue protein sequence, read N- to C-terminus: Cell division protein FtsX (308 aa).

Residues 1–24 (MISRFFRHLFEALKSLKRNGWMTV) are Extracellular-facing. The helical transmembrane segment at 25-45 (AAVSSVMITLTLVAIFASVIF) threads the bilayer. At 46 to 178 (NTAKLATDIE…NTERLFKLAS (133 aa)) the chain is on the cytoplasmic side. The helical transmembrane segment at 179–199 (FIRVWGLGIAALLIFIAAFLI) threads the bilayer. The Extracellular portion of the chain corresponds to 200–236 (SNTIRITIISRSREIQIMRLVGAKNSYIRGPFLLEGA). A helical transmembrane segment spans residues 237–257 (FIGLLGAIAPSVLVFIVYQIV). Residues 258–276 (YQSVNKSLVGQNLSMISPD) are Cytoplasmic-facing. The helical transmembrane segment at 277-297 (LFSPLMIALLFVIGVFIGSLG) threads the bilayer. At 298 to 308 (SGISMRRFLKI) the chain is on the extracellular side.

It belongs to the ABC-4 integral membrane protein family. FtsX subfamily. Interacts with FtsE. Interacts (via large extracellular loop) with PcsB (via N-terminal coiled coil domain). This interaction directs PcsB to equatorial and septal sites of dividing cells.

It localises to the cell membrane. Part of the ABC transporter FtsEX involved in asymmetric cellular division facilitating the initiation of sporulation. Required in maintaining normal growth and cellular morphology. The protein is Cell division protein FtsX of Streptococcus pneumoniae (strain ATCC BAA-255 / R6).